Consider the following 383-residue polypeptide: L-lactate dehydrogenase (383 aa).

One can recognise an FMN hydroxy acid dehydrogenase domain in the interval 1 to 380 (MIISSTFDYR…THESLASTDA (380 aa)). Residue Tyr-24 coordinates substrate. FMN-binding residues include Ser-106 and Gln-127. Tyr-129 serves as a coordination point for substrate. Residue Thr-155 participates in FMN binding. Arg-164 serves as a coordination point for substrate. Lys-251 lines the FMN pocket. His-275 (proton acceptor) is an active-site residue. Arg-278 lines the substrate pocket. 306–330 (DSGVRSGLDVVRMIAQGADAVMIGR) contacts FMN.

It belongs to the FMN-dependent alpha-hydroxy acid dehydrogenase family. Requires FMN as cofactor.

Its subcellular location is the cell inner membrane. It carries out the reaction (S)-lactate + A = pyruvate + AH2. In terms of biological role, catalyzes the conversion of L-lactate to pyruvate. Is coupled to the respiratory chain. This chain is L-lactate dehydrogenase, found in Bartonella quintana (strain Toulouse) (Rochalimaea quintana).